A 269-amino-acid chain; its full sequence is Intercellular adhesion molecule 4 (269 aa).

Residues 1–20 form the signal peptide; the sequence is SLFPLSLLFFLAAAYPGVGS. At 21–238 the chain is on the extracellular side; sequence ALGRRTKRAQ…MLAWSSAPTA (218 aa). 2 Ig-like C2-type domains span residues 60–122 and 144–215; these read GKSV…TRWA and GRKY…LNLD. N-linked (GlcNAc...) asparagine glycosylation is found at N66, N76, N188, and N221. Disulfide bonds link C67-C111, C67-C115, C71-C115, and C151-C208. A helical transmembrane segment spans residues 239-259; that stretch reads LASVSIAALVGILLTVGAAYL. Residues 260–269 lie on the Cytoplasmic side of the membrane; it reads CKCLAMKSQA.

Belongs to the immunoglobulin superfamily. ICAM family. N- and O-glycosylated.

It is found in the cell membrane. In terms of biological role, ICAM proteins are ligands for the leukocyte adhesion protein LFA-1 (integrin alpha-L/beta-2). ICAM4 is also a ligand for alpha-4/beta-1 and alpha-V integrins. The chain is Intercellular adhesion molecule 4 (ICAM4) from Pan troglodytes (Chimpanzee).